We begin with the raw amino-acid sequence, 346 residues long: GTPase Obg (346 aa).

The region spanning 1-158 (MFVDECVVKL…GTYRLVLKSI (158 aa)) is the Obg domain. One can recognise an OBG-type G domain in the interval 159–332 (ADVGLVGFPN…LKKELLKRVT (174 aa)). GTP is bound by residues 165-172 (GFPNAGKS), 190-194 (FTTLH), 216-219 (DVPG), 286-289 (NKMD), and 313-315 (SCL). Serine 172 and threonine 192 together coordinate Mg(2+).

The protein belongs to the TRAFAC class OBG-HflX-like GTPase superfamily. OBG GTPase family. In terms of assembly, monomer. It depends on Mg(2+) as a cofactor.

The protein resides in the cytoplasm. An essential GTPase which binds GTP, GDP and possibly (p)ppGpp with moderate affinity, with high nucleotide exchange rates and a fairly low GTP hydrolysis rate. Plays a role in control of the cell cycle, stress response, ribosome biogenesis and in those bacteria that undergo differentiation, in morphogenesis control. This Opitutus terrae (strain DSM 11246 / JCM 15787 / PB90-1) protein is GTPase Obg.